Consider the following 164-residue polypeptide: UBA-like domain-containing protein 2 (164 aa).

S2 bears the N-acetylserine mark. The disordered stretch occupies residues 128-164 (SSPTTFHHLHRPQPTWPPGAQQGGAQQKAMAAMDGQR). The segment covering 146–164 (GAQQGGAQQKAMAAMDGQR) has biased composition (low complexity).

This sequence belongs to the UBALD family.

The chain is UBA-like domain-containing protein 2 (UBALD2) from Homo sapiens (Human).